Reading from the N-terminus, the 192-residue chain is MMEVPREIIEKLEIFQKLVKKWNKSINLVSDNTIHNFWQRHILDSLQLIQYIDNKEIHLVDIGSGSGLPGIVLSIAGVAQVSLIEADLRKCIFLEKASKISNNNIQIINQRIEKVEIDCSILTCRAFSNLNTIFNCIKNISVREKFLLLKGKNYLTEIVEAKERWLFGYLIHQSITCEEGKILEVSNLTKMI.

S-adenosyl-L-methionine contacts are provided by residues Gly63, Leu68, 112 to 113 (IE), and Arg125.

This sequence belongs to the methyltransferase superfamily. RNA methyltransferase RsmG family.

It localises to the cytoplasm. The enzyme catalyses guanosine(527) in 16S rRNA + S-adenosyl-L-methionine = N(7)-methylguanosine(527) in 16S rRNA + S-adenosyl-L-homocysteine. In terms of biological role, specifically methylates the N7 position of guanine in position 527 of 16S rRNA. The protein is Ribosomal RNA small subunit methyltransferase G of Rickettsia africae (strain ESF-5).